A 642-amino-acid chain; its full sequence is 1-deoxy-D-xylulose-5-phosphate synthase 2 (642 aa).

Residues His-73 and 113–115 (SHA) contribute to the thiamine diphosphate site. Asp-144 is a binding site for Mg(2+). Thiamine diphosphate-binding positions include 145-146 (GA), Asn-174, Tyr-285, and Glu-366. Asn-174 contributes to the Mg(2+) binding site.

This sequence belongs to the transketolase family. DXPS subfamily. As to quaternary structure, homodimer. The cofactor is Mg(2+). It depends on thiamine diphosphate as a cofactor.

It catalyses the reaction D-glyceraldehyde 3-phosphate + pyruvate + H(+) = 1-deoxy-D-xylulose 5-phosphate + CO2. Its pathway is metabolic intermediate biosynthesis; 1-deoxy-D-xylulose 5-phosphate biosynthesis; 1-deoxy-D-xylulose 5-phosphate from D-glyceraldehyde 3-phosphate and pyruvate: step 1/1. Functionally, catalyzes the acyloin condensation reaction between C atoms 2 and 3 of pyruvate and glyceraldehyde 3-phosphate to yield 1-deoxy-D-xylulose-5-phosphate (DXP). The protein is 1-deoxy-D-xylulose-5-phosphate synthase 2 of Streptomyces avermitilis (strain ATCC 31267 / DSM 46492 / JCM 5070 / NBRC 14893 / NCIMB 12804 / NRRL 8165 / MA-4680).